The following is a 174-amino-acid chain: Endoribonuclease YbeY (174 aa).

Residues His-124, His-128, and His-134 each contribute to the Zn(2+) site.

Belongs to the endoribonuclease YbeY family. The cofactor is Zn(2+).

It localises to the cytoplasm. Its function is as follows. Single strand-specific metallo-endoribonuclease involved in late-stage 70S ribosome quality control and in maturation of the 3' terminus of the 16S rRNA. The protein is Endoribonuclease YbeY of Synechococcus elongatus (strain ATCC 33912 / PCC 7942 / FACHB-805) (Anacystis nidulans R2).